The sequence spans 545 residues: MSRVTNTPEWQKLKEYSNKLPHMRELFATDSARFDKMSLKACGLFLDYSKNRVTEVVLGALFDLAKQAQLEARINAMFAGDIINTTEKRAVLHTALRAPNDAVVEVDGVNVVPEVHATLDKIESFVASITSGEWRGYTGKAITDIVSIGIGGSFLGPKIVTQALRPYWTGKLNCHFVANVDATSLVEKLKLVDPETTLFLMSSKSFGTQETLTNTLSARDWFLQSGASQADVAKHFAAVTSNVAKATDFGIDEANVFPMWDWVGGRYSLWSAIGLPIALMVGMDNYRALLAGARSMDEHFTSAPLAENMPVIMGLLSVWYGNFFNAQSHVVLTYDHYLRGLPAYFQQLDMESNGKSAMMDGETVDFSTGPVIWGGEGTNGQHAYHQLLHQGTALIPADFIMPLQSHNPLGEHHVQLASNCFGQTQALMQGRTYEEALAELAASNLSDDEKSLIARHKVMEGNKPSNTLLMDKLTPSTLGALIALYEHRTFVQGVIWDINSFDQWGVELGKTLGNDVLARLTADEDASALDSSSNALINLFRKGQI.

The Proton donor role is filled by glutamate 351. Active-site residues include histidine 382 and lysine 510.

This sequence belongs to the GPI family.

The protein localises to the cytoplasm. It carries out the reaction alpha-D-glucose 6-phosphate = beta-D-fructose 6-phosphate. It functions in the pathway carbohydrate biosynthesis; gluconeogenesis. The protein operates within carbohydrate degradation; glycolysis; D-glyceraldehyde 3-phosphate and glycerone phosphate from D-glucose: step 2/4. In terms of biological role, catalyzes the reversible isomerization of glucose-6-phosphate to fructose-6-phosphate. This Shewanella amazonensis (strain ATCC BAA-1098 / SB2B) protein is Glucose-6-phosphate isomerase.